A 384-amino-acid polypeptide reads, in one-letter code: Adaptive-response sensory kinase SasA (384 aa).

A Histidine kinase domain is found at Met-162–Arg-384. Position 165 is a phosphohistidine; by autocatalysis (His-165).

In terms of assembly, homooligomerizes. Interacts with KaiC. Participates in the KaiABC clock complex, whose core is composed of a KaiC homohexamer, 6 KaiB and up to 6 KaiA dimers. SasA and KaiB(fs) compete to bind to KaiC.

The catalysed reaction is ATP + protein L-histidine = ADP + protein N-phospho-L-histidine.. Member of the two-component regulatory system SasA/RpaA involved in genome-wide circadian gene expression. One of several clock output pathways. Participates in the Kai clock protein complex, the main circadian regulator in cyanobacteria, via its interaction with KaiC. KaiC enhances the autophosphorylation activity of SasA, which then transfers its phosphate group to RpaA to activate it. In addition to its output function, recruits fold-shifted KaiB (KaiB(fs)) to KaiC to cooperatively form the KaiB(6):KaiC(6) complex (independent of SasA kinase activity). Required for robustness of the circadian rhythm of gene expression and is involved in clock output, also required for adaptation to light/dark cycles. This is Adaptive-response sensory kinase SasA from Microcystis aeruginosa (strain NIES-843 / IAM M-2473).